Reading from the N-terminus, the 288-residue chain is Elongation factor Ts (288 aa).

Positions 82-85 are involved in Mg(2+) ion dislocation from EF-Tu; sequence TDFV.

The protein belongs to the EF-Ts family.

It is found in the cytoplasm. Functionally, associates with the EF-Tu.GDP complex and induces the exchange of GDP to GTP. It remains bound to the aminoacyl-tRNA.EF-Tu.GTP complex up to the GTP hydrolysis stage on the ribosome. In Chlorobaculum parvum (strain DSM 263 / NCIMB 8327) (Chlorobium vibrioforme subsp. thiosulfatophilum), this protein is Elongation factor Ts.